The chain runs to 433 residues: MLAILGFLMMLVFMALIMTKRLSVLTALVLTPIVFALIAGFGFTEVGDMMISGIQQVAPTAVMIMFAILYFGIMIDTGLFDPMVGKILSMVKGDPLKIVVGTAVLTMLVALDGDGSTTYMITTSAMLPLYLLLGIRPIILAGIAGVGMGIMNTIPWGGATPRAASALGVDPAELTGPMIPVIASGMLCMVAVAYVLGKAERKRLGVIELKQPANANEPAAAVEDEWKRPKLWWFNLLLTLSLIGCLVSGKVSLTVLFVIAFCIALIVNYPNLEHQRQRIAAHSSNVLAIGSMIFAAGVFTGILTGTKMVDEMAISLVSMIPEQMGGLIPAIVALTSGIFTFLMPNDAYFYGVLPILSETAVAYGVDKVEIARASIIGQPIHMLSPLVPSTHLLVGLVGVSIDDHQKFALKWAVLAVIVMTAIALLIGAISISV.

12 helical membrane-spanning segments follow: residues 2-22 (LAIL…TKRL), 24-44 (VLTA…FGFT), 60-80 (TAVM…TGLF), 98-118 (IVVG…GSTT), 131-151 (LLLG…MGIM), 176-196 (GPMI…AYVL), 247-267 (VSGK…ALIV), 286-306 (VLAI…LTGT), 324-344 (MGGL…FLMP), 345-365 (NDAY…AYGV), 379-399 (PIHM…LVGV), and 411-431 (WAVL…AISI).

The protein belongs to the CitM (TC 2.A.11) transporter family.

The protein resides in the cell membrane. Its activity is regulated as follows. The uptake activity increases with increasing Mg(2+) concentrations. Inhibited by FCCP, TCC and nigericin. In terms of biological role, proton motive force-driven secondary transporter that mediates the transport of citrate complexed to Mg(2+). Cotransports at least two protons per Mg(2+)-citrate complex. Can also transport citrate in complex with Ni(2+), Mn(2+), Co(2+), and Zn(2+). This is Mg(2+)/citrate complex secondary transporter (citM) from Bacillus subtilis (strain 168).